A 464-amino-acid polypeptide reads, in one-letter code: NADH-quinone oxidoreductase subunit N 2 (464 aa).

Helical transmembrane passes span 12–32 (VGII…LIGF), 33–53 (LGFL…LAGY), 62–82 (INAF…FVIF), 93–113 (TFVE…IMVS), 117–137 (LAVI…SVGM), 152–172 (LVLG…YIGA), 189–209 (FALA…AAPF), 227–247 (FIST…ASYI), 254–274 (FSYI…LVAY), 282–304 (MLAY…YNPL), 310–330 (IFYV…LSIL), 351–371 (PFLA…PPFA), 400–420 (IIAA…EPAT), and 434–454 (IGIS…NILF).

This sequence belongs to the complex I subunit 2 family. In terms of assembly, NDH-1 is composed of 14 different subunits. Subunits NuoA, H, J, K, L, M, N constitute the membrane sector of the complex.

The protein resides in the cell inner membrane. It catalyses the reaction a quinone + NADH + 5 H(+)(in) = a quinol + NAD(+) + 4 H(+)(out). In terms of biological role, NDH-1 shuttles electrons from NADH, via FMN and iron-sulfur (Fe-S) centers, to quinones in the respiratory chain. The immediate electron acceptor for the enzyme in this species is believed to be ubiquinone. Couples the redox reaction to proton translocation (for every two electrons transferred, four hydrogen ions are translocated across the cytoplasmic membrane), and thus conserves the redox energy in a proton gradient. In Hydrogenobaculum sp. (strain Y04AAS1), this protein is NADH-quinone oxidoreductase subunit N 2.